The chain runs to 80 residues: FXYD domain-containing ion transport regulator 7 (80 aa).

Residues Met-1–Tyr-22 are Extracellular-facing. 3 O-linked (GlcNAc) threonine glycosylation sites follow: Thr-3, Thr-5, and Thr-9. The helical transmembrane segment at Ala-23–Leu-45 threads the bilayer. Residues Ser-46–Val-80 lie on the Cytoplasmic side of the membrane. Positions Asp-55–Val-80 are disordered. Position 73 is a phosphoserine (Ser-73).

The protein belongs to the FXYD family. Regulatory subunit of the sodium/potassium-transporting ATPase which is composed of a catalytic alpha subunit, a non-catalytic beta subunit and an additional regulatory subunit. The regulatory subunit, a member of the FXYD protein family, modulates the enzymatic activity in a tissue- and isoform-specific way by changing affinities of the Na+/K+-ATPase toward Na(+), K(+) or ATP. Post-translationally, O-glycosylated; required for stabilization and translocation to the plasma membrane.

The protein resides in the cell membrane. Its function is as follows. Associates with and regulates the activity of the sodium/potassium-transporting ATPase (NKA) which catalyzes the hydrolysis of ATP coupled with the exchange of Na(+) and K(+) ions across the plasma membrane. Reduces the apparent affinity for external K(+), an effect that depends on the presence of external Na(+) and voltage. Increases the apparent affinity for intracellular Na(+). The protein is FXYD domain-containing ion transport regulator 7 (Fxyd7) of Mus musculus (Mouse).